Reading from the N-terminus, the 361-residue chain is Phenylalanine--tRNA ligase alpha subunit (361 aa).

Glutamate 260 provides a ligand contact to Mg(2+).

This sequence belongs to the class-II aminoacyl-tRNA synthetase family. Phe-tRNA synthetase alpha subunit type 1 subfamily. Tetramer of two alpha and two beta subunits. It depends on Mg(2+) as a cofactor.

Its subcellular location is the cytoplasm. It catalyses the reaction tRNA(Phe) + L-phenylalanine + ATP = L-phenylalanyl-tRNA(Phe) + AMP + diphosphate + H(+). In Chelativorans sp. (strain BNC1), this protein is Phenylalanine--tRNA ligase alpha subunit.